The primary structure comprises 484 residues: MELNKLKLTELVPLISKGEVRPHEIIIDVFKRVQEVEGKVKAYITLTVEKAYDMAREAENAIFSGKKSLLTGIPIAVKDNICTKGILTTCASKILYNFYPPYESTVTSKLLNNKYILIGKTNMDEFAMGSSTENSGFHVTKNPWDLERVPGGSSGGSAAAVAADECIAALGSDTGGSIRQPASFCGVVGLKPTYGRVSRFGLVAFASSLDQIGPITKCVADAALLMNVISGHDPMDSTSAPIESSDFTEYLGKEVKGIKIGIPKEYFIEGMDKEVEERIKDAIKELESLGCIPVEISLPHTEYAVATYYIIATSEASSNLARYDGVKYGLRVQGKDLLEMYMKTRSRGFGTEVKRRIMLGTYSLSAGYYEAYYKKAQQVRTLIKNDFEKAFEKVDFIVTPTAPSPAFKIGEKIDDPLQMYLSDIFTISVNLAGVPAISLPCGFSEKGLPVGLQIIGKPFDEAGILQLAYAYEQSTPWHKMKPLL.

Active-site charge relay system residues include Lys-78 and Ser-153. Ser-177 (acyl-ester intermediate) is an active-site residue.

The protein belongs to the amidase family. GatA subfamily. In terms of assembly, heterotrimer of A, B and C subunits.

The catalysed reaction is L-glutamyl-tRNA(Gln) + L-glutamine + ATP + H2O = L-glutaminyl-tRNA(Gln) + L-glutamate + ADP + phosphate + H(+). Allows the formation of correctly charged Gln-tRNA(Gln) through the transamidation of misacylated Glu-tRNA(Gln) in organisms which lack glutaminyl-tRNA synthetase. The reaction takes place in the presence of glutamine and ATP through an activated gamma-phospho-Glu-tRNA(Gln). This Thermodesulfovibrio yellowstonii (strain ATCC 51303 / DSM 11347 / YP87) protein is Glutamyl-tRNA(Gln) amidotransferase subunit A.